A 429-amino-acid chain; its full sequence is Phosphoribosylamine--glycine ligase (429 aa).

The region spanning 109–316 is the ATP-grasp domain; that stretch reads KDFLARHNIP…LVELCLAACE (208 aa). 135–196 serves as a coordination point for ATP; that stretch reads LREKGAPIVI…EEFLDGEEAS (62 aa). Residues 212–237 form a disordered region; that stretch reads SQDHKRVGDKDTGPNTGGMGAYSPAP. Positions 213 to 223 are enriched in basic and acidic residues; sequence QDHKRVGDKDT. Positions 286 and 288 each coordinate Mg(2+).

Belongs to the GARS family. Monomer. The cofactor is Mg(2+). Requires Mn(2+) as cofactor.

It carries out the reaction 5-phospho-beta-D-ribosylamine + glycine + ATP = N(1)-(5-phospho-beta-D-ribosyl)glycinamide + ADP + phosphate + H(+). Its pathway is purine metabolism; IMP biosynthesis via de novo pathway; N(1)-(5-phospho-D-ribosyl)glycinamide from 5-phospho-alpha-D-ribose 1-diphosphate: step 2/2. This chain is Phosphoribosylamine--glycine ligase, found in Escherichia coli O157:H7.